The following is a 492-amino-acid chain: 3-octaprenyl-4-hydroxybenzoate carboxy-lyase (492 aa).

Asn177 provides a ligand contact to Mn(2+). Residues 180 to 182, 194 to 196, and 199 to 200 contribute to the prenylated FMN site; these read IYR, RWL, and RG. Glu243 is a Mn(2+) binding site. Asp292 serves as the catalytic Proton donor.

This sequence belongs to the UbiD family. Homohexamer. It depends on prenylated FMN as a cofactor. Mn(2+) serves as cofactor.

It is found in the cell membrane. It catalyses the reaction a 4-hydroxy-3-(all-trans-polyprenyl)benzoate + H(+) = a 2-(all-trans-polyprenyl)phenol + CO2. The protein operates within cofactor biosynthesis; ubiquinone biosynthesis. In terms of biological role, catalyzes the decarboxylation of 3-octaprenyl-4-hydroxy benzoate to 2-octaprenylphenol, an intermediate step in ubiquinone biosynthesis. The polypeptide is 3-octaprenyl-4-hydroxybenzoate carboxy-lyase (Neisseria meningitidis serogroup B (strain ATCC BAA-335 / MC58)).